A 177-amino-acid chain; its full sequence is Cytidylate kinase (177 aa).

G8 to T16 provides a ligand contact to ATP.

It belongs to the cytidylate kinase family. Type 2 subfamily.

It localises to the cytoplasm. The enzyme catalyses CMP + ATP = CDP + ADP. It carries out the reaction dCMP + ATP = dCDP + ADP. The sequence is that of Cytidylate kinase from Staphylothermus marinus (strain ATCC 43588 / DSM 3639 / JCM 9404 / F1).